The primary structure comprises 625 residues: DELLA protein SLR1 (625 aa).

The tract at residues 1–34 (MKREYQEAGGSSGGGSSADMGSCKDKVMAGAAGE) is disordered. The DELLA motif motif lies at 39–43 (DELLA). The disordered stretch occupies residues 167–208 (TADPSAADSARDTKRMRTGGGSTSSSSSSSSSLGGGASRGSV). Over residues 189–198 (TSSSSSSSSS) the composition is skewed to low complexity. The GRAS domain occupies 232-621 (VDTQEAGIRL…RPLIATSAWR (390 aa)). Residues 239-294 (IRLVHALLACAEAVQQENFAAAEALVKQIPTLAASQGGAMRKVAAYFGEALARRVY) form a leucine repeat I (LRI) region. The interval 241–278 (LVHALLACAEAVQQENFAAAEALVKQIPTLAASQGGAM) is required for possible homodimerization. Residues 246–250 (LACAE) carry the LxCxE motif motif. Residues 313-378 (HAHFYESCPY…GGPPSFRLTG (66 aa)) are VHIID. The VHIID motif lies at 344 to 348 (VHVVD). The segment at 392 to 431 (QVGWKLAQFAHTIRVDFQYRGLVAATLADLEPFMLQPEGE) is leucine repeat II (LRII). A PFYRE region spans residues 441–542 (IAVNSVFELH…EVYLGRQICN (102 aa)). Residues 449-453 (LHRLL) carry the LXXLL motif motif. The tract at residues 545–621 (ACEGAERTER…RPLIATSAWR (77 aa)) is SAW.

Belongs to the GRAS family. DELLA subfamily.

Functionally, probable transcriptional regulator that acts as a repressor of the gibberellin (GA) signaling pathway. Probably acts by participating in large multiprotein complexes that repress transcription of GA-inducible genes. Upon GA application, it is degraded by the proteasome, allowing the GA signaling pathway. In contrast, its overexpression prevents the GA signaling pathway and induces a dwarf phenotype. This is DELLA protein SLR1 from Oryza sativa subsp. indica (Rice).